The chain runs to 333 residues: uncharacterized protein (333 aa).

This is an uncharacterized protein from Escherichia coli (Bacteriophage T4).